Consider the following 766-residue polypeptide: Pumilio domain-containing protein 12 (766 aa).

2 disordered regions span residues 63-98 (KKSS…KSKK) and 152-197 (AQEE…GDES). Over residues 79–88 (SLCSESSFGS) the composition is skewed to polar residues. Positions 179–193 (PADDENLESVDEQAG) are enriched in acidic residues. The PUM-HD domain occupies 245–602 (ARAQKCKELW…LYAGITENLY (358 aa)). Pumilio repeat units follow at residues 313–348 (ELTP…IIIN), 461–496 (SLKD…LIVK), 497–534 (NFKD…VIVS), and 535–571 (ELAN…REIT).

The polypeptide is Pumilio domain-containing protein 12 (puf-12) (Caenorhabditis elegans).